The primary structure comprises 187 residues: METSTSSSQSLIPLPMSKKDYSSEIICAFDIGAKNPARTVLEVKDNSVRVLDISKLDWSSDWERRIAQDLSQYEYTTVLLERQPRRSPYVKFIYFIKGFLYHTSAAKVICVSPVMSGNSYRDRKKRSVEAFLDWMDTFGLRDSVPDRRKLDDVADSFNLAMRYVLDKWNTNYTPYNRCKYRNYIKKM.

Belongs to the RuvC family. Poxviruses-type subfamily. Mg(2+) serves as cofactor.

Functionally, plays a role in DNA replication by cleaving viral DNA concatamers to yield unit-length viral genomes. The concatamer junctions contain inverted repeat sequences that can be extruded as cruciforms, yielding Holliday junctions that A22 protein cleaves. The sequence is that of Resolvase OPG149 (OPG149) from Cynomys gunnisoni (Gunnison's prairie dog).